The sequence spans 476 residues: tRNA(Ile)-lysidine synthase (476 aa).

26–31 (SGGSDS) contacts ATP.

The protein belongs to the tRNA(Ile)-lysidine synthase family.

Its subcellular location is the cytoplasm. It carries out the reaction cytidine(34) in tRNA(Ile2) + L-lysine + ATP = lysidine(34) in tRNA(Ile2) + AMP + diphosphate + H(+). Functionally, ligates lysine onto the cytidine present at position 34 of the AUA codon-specific tRNA(Ile) that contains the anticodon CAU, in an ATP-dependent manner. Cytidine is converted to lysidine, thus changing the amino acid specificity of the tRNA from methionine to isoleucine. The chain is tRNA(Ile)-lysidine synthase from Bartonella quintana (strain Toulouse) (Rochalimaea quintana).